We begin with the raw amino-acid sequence, 154 residues long: RxLR effector protein PITG_12737 (154 aa).

An N-terminal signal peptide occupies residues 1-16; the sequence is MRVYFILILAVATVSG. Residues 42–58 carry the RxLR-dEER motif; it reads RLLRAELTTDETYPEER.

It belongs to the RxLR effector family.

It is found in the secreted. The protein resides in the host nucleus. The protein localises to the host cytoplasm. Its function is as follows. Effector that enhances P.infestans colonization of Nicotiana benthamiana leaves. This chain is RxLR effector protein PITG_12737, found in Phytophthora infestans (strain T30-4) (Potato late blight agent).